Here is a 1064-residue protein sequence, read N- to C-terminus: Adenylate cyclase type 4 (1064 aa).

At 1 to 28 (MARLFSPRPPPSEDLFYETYYSLSQQYP) the chain is on the cytoplasmic side. 6 consecutive transmembrane segments (helical) span residues 29 to 50 (LLIL…VAWA), 61 to 80 (FLTT…GLAS), 94 to 117 (GLIW…VSAW), 120 to 138 (VSFF…PLGM), 141 to 162 (AAAA…YLGW), and 170 to 190 (LLPQ…VGAY). Topologically, residues 191-582 (HKALMERALR…YRLSALPAFK (392 aa)) are cytoplasmic. Residues Asp278, Ile279, and Asp322 each contribute to the Mg(2+) site. ATP-binding positions include 278 to 283 (DIVGFT), 320 to 322 (LGD), and Arg366. The segment at 498 to 523 (DSPASTSTPLPEKAFSPQWSLDRSRT) is disordered. Phosphoserine is present on Ser517. Residue Thr533 is modified to Phosphothreonine. 3 consecutive transmembrane segments (helical) span residues 583–604 (YYAA…LVTT), 608–630 (ALAT…CFSE), and 661–684 (VALG…FLPV). Residues 685–707 (SSDCPFLAPNVSSVAFNTSWELP) are Extracellular-facing. Residues Asn694 and Asn701 are each glycosylated (N-linked (GlcNAc...) asparagine). Transmembrane regions (helical) follow at residues 708-733 (ASLP…SLFL), 741-761 (LLLL…SHAW), and 788-804 (MGAI…LVLA). Residues 805–1064 (RQNEYYCRLD…LTRTGSPSAS (260 aa)) lie on the Cytoplasmic side of the membrane. Residues Lys914, 994-996 (DIW), 1001-1005 (NVASR), and Lys1041 each bind ATP.

The protein belongs to the adenylyl cyclase class-4/guanylyl cyclase family. It depends on Mg(2+) as a cofactor. Mn(2+) is required as a cofactor. In terms of tissue distribution, widely distributed.

The protein localises to the cell membrane. Its subcellular location is the cytoplasm. The catalysed reaction is ATP = 3',5'-cyclic AMP + diphosphate. With respect to regulation, activated by forskolin. Insensitive to calcium/calmodulin. Stimulated by GNAS and by the G-protein beta and gamma subunit complex. Its function is as follows. Catalyzes the formation of the signaling molecule cAMP in response to G-protein signaling. This Rattus norvegicus (Rat) protein is Adenylate cyclase type 4 (Adcy4).